The primary structure comprises 380 residues: Hydrogenase maturation factor HypD1 (380 aa).

Positions 36, 64, and 67 each coordinate Fe cation.

It belongs to the HypD family. It depends on [4Fe-4S] cluster as a cofactor.

Its pathway is protein modification; [NiFe] hydrogenase maturation. Involved in the maturation of [NiFe] hydrogenases. Involved in the biosynthesis of the Fe(CN)(2)CO cofactor. This is Hydrogenase maturation factor HypD1 (hypD1) from Bradyrhizobium diazoefficiens (strain JCM 10833 / BCRC 13528 / IAM 13628 / NBRC 14792 / USDA 110).